Here is a 1523-residue protein sequence, read N- to C-terminus: Rho GTPase-activating protein gacHH (1523 aa).

Kelch repeat units follow at residues 30–76, 83–133, and 135–184; these read DIVI…YGHS, KMFV…LIYD, and YILI…DISP. Polar residues-rich tracts occupy residues 161–173 and 184–194; these read NSWT…SSTG and PRSSTTTPTHQ. Residues 161–256 form a disordered region; the sequence is NSWTKPSSNS…GGSPMTTPPT (96 aa). Residues 195–211 show a composition bias toward low complexity; that stretch reads SVNGSNSNSSSSSRVRS. Polar residues predominate over residues 212–221; it reads ATISSHNNSP. Residues 227-244 are compositionally biased toward low complexity; that stretch reads NNNNNNNNNSNNSNNSNN. 3 Kelch repeats span residues 335–384, 386–441, and 443–496; these read KAFI…AIGS, LFIF…PISS, and ILII…PITS. Disordered stretches follow at residues 510–569, 609–631, and 647–671; these read LPHL…DNIN, QSID…VSND, and NKNN…NSGS. Residues 615–626 are compositionally biased toward gly residues; it reads GGSGGGSGGGNG. Residues 690 to 729 adopt a coiled-coil conformation; sequence CIKKYNSLKDSYLELKQKYQEEREKRLELEKELERYRLSS. Residues 748-786 are disordered; that stretch reads NINSNNSTTTTTTTTTTTTTPIPLSTSNNNNNNNNNSTL. Residues 812-840 are a coiled coil; the sequence is YEKRVKWKENTEKEANQQLEVIKSKIDLF. 5 disordered regions span residues 861–881, 905–927, 963–991, 1006–1096, and 1143–1194; these read SENI…QNPQ, LTPR…PIPL, TPQK…SKST, SGHF…RLGK, and NGAN…SERI. Over residues 870–881 the composition is skewed to low complexity; it reads QQQQQQQQQNPQ. The span at 905 to 915 shows a compositional bias: basic and acidic residues; it reads LTPRKSRENSV. Composition is skewed to low complexity over residues 971-981, 1012-1030, 1043-1079, and 1143-1153; these read PQQQQQQQPPQ, SSSN…FSNN, QHQQ…LQTQ, and NGANNLGGLVL. Residues 1151–1228 are a coiled coil; it reads LVLTSDKEKE…KKHKKIKGLF (78 aa). A compositionally biased stretch (basic and acidic residues) spans 1155–1194; sequence SDKEKEKLEKEREKSERIEREKQEKEREKLEKEREKSERI. A Rho-GAP domain is found at 1233-1411; it reads SNKESLPFRR…TFIEDFHYIF (179 aa). The tract at residues 1425–1482 is disordered; the sequence is DDDYDSSSFGSNNTPSSHSPHSSSPTLNPAVTTTTTTTTTTNTTTTTNTTTTPTSATI. Residues 1430–1476 show a composition bias toward low complexity; it reads SSSFGSNNTPSSHSPHSSSPTLNPAVTTTTTTTTTTNTTTTTNTTTT.

It localises to the cytoplasm. Its function is as follows. Rho GTPase-activating protein involved in the signal transduction pathway. The chain is Rho GTPase-activating protein gacHH (gacHH) from Dictyostelium discoideum (Social amoeba).